A 284-amino-acid chain; its full sequence is 2,3,4,5-tetrahydropyridine-2,6-dicarboxylate N-succinyltransferase (284 aa).

The substrate site is built by Arg111 and Asp148.

The protein belongs to the transferase hexapeptide repeat family. In terms of assembly, homotrimer.

The protein localises to the cytoplasm. The catalysed reaction is (S)-2,3,4,5-tetrahydrodipicolinate + succinyl-CoA + H2O = (S)-2-succinylamino-6-oxoheptanedioate + CoA. Its pathway is amino-acid biosynthesis; L-lysine biosynthesis via DAP pathway; LL-2,6-diaminopimelate from (S)-tetrahydrodipicolinate (succinylase route): step 1/3. In Ehrlichia ruminantium (strain Gardel), this protein is 2,3,4,5-tetrahydropyridine-2,6-dicarboxylate N-succinyltransferase.